The sequence spans 295 residues: (R)-3-hydroxydecanoyl-ACP:CoA transacylase (295 aa).

The AB hydrolase-1 domain maps to N28–D254.

The protein operates within polyester biosynthesis; polyhydroxyalkanoate biosynthesis. Catalyzes the transfer of the acyl moiety from in vitro synthesized 3-hydroxydecanoyl-CoA to acyl carrier protein. This Ectopseudomonas oleovorans (Pseudomonas oleovorans) protein is (R)-3-hydroxydecanoyl-ACP:CoA transacylase (phaG).